Consider the following 685-residue polypeptide: Serine/threonine-protein kinase PLK2 (685 aa).

Positions 24–71 (KGCGADSKKKRPPQPPEESQPPQSQAQVPPAAAHHHHHHSHSGPEISR) are disordered. The segment covering 43-55 (QPPQSQAQVPPAA) has biased composition (low complexity). Residues 82 to 334 (YCRGKVLGKG…LDDIIRHDFF (253 aa)) enclose the Protein kinase domain. ATP contacts are provided by residues 88–96 (LGKGGFAKC) and Lys111. The Proton acceptor role is filled by Asp205. Position 239 is a phosphothreonine (Thr239). The tract at residues 406–433 (SITQQPSKHRTDEELQPPTTTVARSGTP) is disordered. 2 consecutive POLO box domains span residues 503–581 (WVTK…YMEE) and 601–685 (YLLQ…QRCN).

This sequence belongs to the protein kinase superfamily. Ser/Thr protein kinase family. CDC5/Polo subfamily. Interacts with NSF; causing NSF dissociation from GRIA2. Interacts with CIB1. In terms of processing, catalytic activity is enhanced by phosphorylation of Thr-239.

It is found in the cytoplasm. The protein localises to the cytoskeleton. Its subcellular location is the microtubule organizing center. The protein resides in the centrosome. It localises to the centriole. It is found in the cell projection. The protein localises to the dendrite. The catalysed reaction is L-seryl-[protein] + ATP = O-phospho-L-seryl-[protein] + ADP + H(+). The enzyme catalyses L-threonyl-[protein] + ATP = O-phospho-L-threonyl-[protein] + ADP + H(+). Its activity is regulated as follows. Activated by phosphorylation of Thr-239. Once activated, activity is stimulated by binding target proteins. Its function is as follows. Tumor suppressor serine/threonine-protein kinase involved in synaptic plasticity, centriole duplication and G1/S phase transition. Polo-like kinases act by binding and phosphorylating proteins that are already phosphorylated on a specific motif recognized by the POLO box domains. Phosphorylates CPAP, NPM1, RAPGEF2, RASGRF1, SNCA, SIPA1L1 and SYNGAP1. Plays a key role in synaptic plasticity and memory by regulating the Ras and Rap protein signaling: required for overactivity-dependent spine remodeling by phosphorylating the Ras activator RASGRF1 and the Rap inhibitor SIPA1L1 leading to their degradation by the proteasome. Conversely, phosphorylates the Rap activator RAPGEF2 and the Ras inhibitor SYNGAP1, promoting their activity. Also regulates synaptic plasticity independently of kinase activity, via its interaction with NSF that disrupts the interaction between NSF and the GRIA2 subunit of AMPARs, leading to a rapid rundown of AMPAR-mediated current that occludes long term depression. Required for procentriole formation and centriole duplication by phosphorylating CPAP and NPM1, respectively. Its induction by p53/TP53 suggests that it may participate in the mitotic checkpoint following stress. This Pongo abelii (Sumatran orangutan) protein is Serine/threonine-protein kinase PLK2 (PLK2).